A 439-amino-acid polypeptide reads, in one-letter code: Ribosomal protein uS12 methylthiotransferase RimO (439 aa).

The MTTase N-terminal domain maps to S2–N114. Residues C11, C45, C77, C146, C150, and C153 each contribute to the [4Fe-4S] cluster site. The Radical SAM core domain maps to T132–E363.

The protein belongs to the methylthiotransferase family. RimO subfamily. The cofactor is [4Fe-4S] cluster.

Its subcellular location is the cytoplasm. The enzyme catalyses L-aspartate(89)-[ribosomal protein uS12]-hydrogen + (sulfur carrier)-SH + AH2 + 2 S-adenosyl-L-methionine = 3-methylsulfanyl-L-aspartate(89)-[ribosomal protein uS12]-hydrogen + (sulfur carrier)-H + 5'-deoxyadenosine + L-methionine + A + S-adenosyl-L-homocysteine + 2 H(+). Its function is as follows. Catalyzes the methylthiolation of an aspartic acid residue of ribosomal protein uS12. This chain is Ribosomal protein uS12 methylthiotransferase RimO, found in Campylobacter jejuni subsp. jejuni serotype O:2 (strain ATCC 700819 / NCTC 11168).